A 159-amino-acid polypeptide reads, in one-letter code: Urease accessory protein UreE (159 aa).

It belongs to the UreE family.

The protein resides in the cytoplasm. Functionally, involved in urease metallocenter assembly. Binds nickel. Probably functions as a nickel donor during metallocenter assembly. The polypeptide is Urease accessory protein UreE (Vibrio parahaemolyticus).